The following is a 371-amino-acid chain: Maltose/maltodextrin import ATP-binding protein MalK (371 aa).

The ABC transporter domain maps to 4–234 (VTLKNVCKAY…PENRFVAGFI (231 aa)). 36 to 43 (GPSGCGKS) serves as a coordination point for ATP.

It belongs to the ABC transporter superfamily. Maltooligosaccharide importer (TC 3.A.1.1.1) family. The complex is composed of two ATP-binding proteins (MalK), two transmembrane proteins (MalG and MalK) and a solute-binding protein (MalE).

Its subcellular location is the cell inner membrane. It carries out the reaction D-maltose(out) + ATP + H2O = D-maltose(in) + ADP + phosphate + H(+). Functionally, part of the ABC transporter complex MalEFGK involved in maltose/maltodextrin import. Responsible for energy coupling to the transport system. This Vibrio vulnificus (strain CMCP6) protein is Maltose/maltodextrin import ATP-binding protein MalK.